The following is an 87-amino-acid chain: UPF0250 protein PC1_1177 (87 aa).

Belongs to the UPF0250 family.

This Pectobacterium carotovorum subsp. carotovorum (strain PC1) protein is UPF0250 protein PC1_1177.